We begin with the raw amino-acid sequence, 171 residues long: 3-hydroxydecanoyl-[acyl-carrier-protein] dehydratase (171 aa).

H70 is an active-site residue.

The protein belongs to the thioester dehydratase family. FabA subfamily. Homodimer.

The protein localises to the cytoplasm. The catalysed reaction is a (3R)-hydroxyacyl-[ACP] = a (2E)-enoyl-[ACP] + H2O. It catalyses the reaction (3R)-hydroxydecanoyl-[ACP] = (2E)-decenoyl-[ACP] + H2O. The enzyme catalyses (2E)-decenoyl-[ACP] = (3Z)-decenoyl-[ACP]. The protein operates within lipid metabolism; fatty acid biosynthesis. Its function is as follows. Necessary for the introduction of cis unsaturation into fatty acids. Catalyzes the dehydration of (3R)-3-hydroxydecanoyl-ACP to E-(2)-decenoyl-ACP and then its isomerization to Z-(3)-decenoyl-ACP. Can catalyze the dehydratase reaction for beta-hydroxyacyl-ACPs with saturated chain lengths up to 16:0, being most active on intermediate chain length. This chain is 3-hydroxydecanoyl-[acyl-carrier-protein] dehydratase, found in Marinomonas sp. (strain MWYL1).